We begin with the raw amino-acid sequence, 110 residues long: UPF0145 protein LMOf2365_0219 (110 aa).

The protein belongs to the UPF0145 family.

This is UPF0145 protein LMOf2365_0219 from Listeria monocytogenes serotype 4b (strain F2365).